A 429-amino-acid chain; its full sequence is MTRSDELFEQAKKTIPGGVNSPVRAFSGVGGSPRFIEKADGAYIFDADGKKYIDYVGSWGPMILGHNHPKIREAVLAAVENGLSFGAPTELEITMAEKVIEMVPSIEQVRMVSSGTEATMSAIRLARGFTNRDKILKFEGCYHGHADCLLVKAGSGALTLGQPSSPGIPEDFAKHTLTATYNDLDSVKAIFEQYPEEISCIIIEPVAGNMNCIPPIDGFLQGLRAICDQYGALMIIDEVMTGFRVSKSGAQGHYGVTPDLTTLGKVIGGGMPVGAFGGRKDVMQFIAPTGPVYQAGTLSGNPIAMSAGLAQMEALCEEGVYEQLAAKTQYIAEGFKAAANKHGIPMAINYVGGMFGFFFTDEATVTNFAQVTKCDTALFAEFYHLMLDEGVYLAPSAYEAGFLSLAHGEEELEATLAAADRVFAKLAKR.

Lys-265 is subject to N6-(pyridoxal phosphate)lysine.

Belongs to the class-III pyridoxal-phosphate-dependent aminotransferase family. HemL subfamily. As to quaternary structure, homodimer. Pyridoxal 5'-phosphate serves as cofactor.

Its subcellular location is the cytoplasm. It catalyses the reaction (S)-4-amino-5-oxopentanoate = 5-aminolevulinate. Its pathway is porphyrin-containing compound metabolism; protoporphyrin-IX biosynthesis; 5-aminolevulinate from L-glutamyl-tRNA(Glu): step 2/2. This is Glutamate-1-semialdehyde 2,1-aminomutase from Shewanella halifaxensis (strain HAW-EB4).